Reading from the N-terminus, the 388-residue chain is Staphopain A (388 aa).

The N-terminal stretch at 1–25 (MKRNFPKLIALSLIFSLSITPIANA) is a signal peptide. A propeptide spanning residues 26 to 214 (ESNSNIKAKD…TSQFKSNNYT (189 aa)) is cleaved from the precursor. Catalysis depends on residues C238, H334, and N355.

It belongs to the peptidase C47 family. In terms of assembly, in the cytoplasm, prematurely activated/folded ScpA forms a stable non-covalent complex with ScpB. Cleavage leads to the activation of ScpA probably by an auto-catalytic manner.

It is found in the secreted. The enzyme catalyses Broad endopeptidase action on proteins including elastin, but rather limited hydrolysis of small-molecule substrates. Assays are conveniently made with hemoglobin, casein or Z-Phe-Arg-NHMec as substrate.. Its activity is regulated as follows. Prematurely activated/folded staphopain A is inhibited by staphostatin A (ScpB), which is probably required to protect staphylococcal cytoplasmic proteins from degradation by ScpA. Also inactivated by heavy metal ions such as Hg(2+) or Ag(+), iodoacetamide, E-64 and human plasma. Cysteine protease that plays an important role in the inhibition of host innate immune response. Cleaves host elastins found in connective tissues, pulmonary surfactant protein A in the lungs, and the chemokine receptor CXCR2 on leukocytes. Proteolytic cleavage of surfactant protein A impairs bacterial phagocytosis by neutrophils while CXCR2 degradation blocks neutrophil activation and chemotaxis. Additionally, promotes vascular leakage by activating the plasma kallikerin/kinin system, resulting in hypotension. The chain is Staphopain A (sspP) from Staphylococcus aureus.